A 247-amino-acid polypeptide reads, in one-letter code: Adenosylcobinamide-GDP ribazoletransferase (247 aa).

A run of 5 helical transmembrane segments spans residues 34–54 (IITF…VFMV), 59–79 (CGAP…TGGF), 113–133 (GGLA…ELAL), 138–158 (ILAS…LLMY), and 194–214 (VLLP…AIFI).

The protein belongs to the CobS family. Mg(2+) serves as cofactor.

The protein localises to the cell inner membrane. It catalyses the reaction alpha-ribazole + adenosylcob(III)inamide-GDP = adenosylcob(III)alamin + GMP + H(+). The catalysed reaction is alpha-ribazole 5'-phosphate + adenosylcob(III)inamide-GDP = adenosylcob(III)alamin 5'-phosphate + GMP + H(+). It participates in cofactor biosynthesis; adenosylcobalamin biosynthesis; adenosylcobalamin from cob(II)yrinate a,c-diamide: step 7/7. In terms of biological role, joins adenosylcobinamide-GDP and alpha-ribazole to generate adenosylcobalamin (Ado-cobalamin). Also synthesizes adenosylcobalamin 5'-phosphate from adenosylcobinamide-GDP and alpha-ribazole 5'-phosphate. In Escherichia coli O45:K1 (strain S88 / ExPEC), this protein is Adenosylcobinamide-GDP ribazoletransferase.